Consider the following 269-residue polypeptide: 2-dehydro-3-deoxyphosphooctonate aldolase (269 aa).

This sequence belongs to the KdsA family.

Its subcellular location is the cytoplasm. It carries out the reaction D-arabinose 5-phosphate + phosphoenolpyruvate + H2O = 3-deoxy-alpha-D-manno-2-octulosonate-8-phosphate + phosphate. It participates in carbohydrate biosynthesis; 3-deoxy-D-manno-octulosonate biosynthesis; 3-deoxy-D-manno-octulosonate from D-ribulose 5-phosphate: step 2/3. The protein operates within bacterial outer membrane biogenesis; lipopolysaccharide biosynthesis. The sequence is that of 2-dehydro-3-deoxyphosphooctonate aldolase from Chlamydia caviae (strain ATCC VR-813 / DSM 19441 / 03DC25 / GPIC) (Chlamydophila caviae).